Reading from the N-terminus, the 334-residue chain is Nucleoid-associated protein YejK (334 aa).

Belongs to the YejK family.

It is found in the cytoplasm. It localises to the nucleoid. This Escherichia fergusonii (strain ATCC 35469 / DSM 13698 / CCUG 18766 / IAM 14443 / JCM 21226 / LMG 7866 / NBRC 102419 / NCTC 12128 / CDC 0568-73) protein is Nucleoid-associated protein YejK.